A 137-amino-acid polypeptide reads, in one-letter code: Large ribosomal subunit protein uL16 (137 aa).

Over residues 1–17 (MLQPKRTKFRKTHKGRN) the composition is skewed to basic residues. Residues 1–23 (MLQPKRTKFRKTHKGRNRGLAQN) form a disordered region.

The protein belongs to the universal ribosomal protein uL16 family. In terms of assembly, part of the 50S ribosomal subunit.

Binds 23S rRNA and is also seen to make contacts with the A and possibly P site tRNAs. In Pseudoalteromonas translucida (strain TAC 125), this protein is Large ribosomal subunit protein uL16.